A 216-amino-acid polypeptide reads, in one-letter code: Endoplasmic reticulum vesicle protein 25 (216 aa).

Positions 1–20 (MASLKSLLSGFLLLAGAAQA) are cleaved as a signal peptide. Over 21–185 (LKFDLEATSS…TNESTNNRVK (165 aa)) the chain is Lumenal. In terms of domain architecture, GOLD spans 36–126 (RRCIRNFVNK…RRHVELDIDI (91 aa)). Residues 186–206 (WFGMATTFLLIALWGWQIMYL) traverse the membrane as a helical segment. At 207–216 (RAYFRSKHLI) the chain is on the cytoplasmic side.

The protein belongs to the EMP24/GP25L family.

It localises to the endoplasmic reticulum membrane. It is found in the golgi apparatus membrane. Its function is as follows. Constituent of COPII-coated endoplasmic reticulum-derived transport vesicles. Required for efficient transport of a subset of secretory proteins to the Golgi. Facilitates retrograde transport from the Golgi to the endoplasmic reticulum. The chain is Endoplasmic reticulum vesicle protein 25 (erv-1) from Neurospora crassa (strain ATCC 24698 / 74-OR23-1A / CBS 708.71 / DSM 1257 / FGSC 987).